Consider the following 93-residue polypeptide: Pyrimidine/purine nucleoside phosphorylase (93 aa).

The protein belongs to the nucleoside phosphorylase PpnP family.

It catalyses the reaction a purine D-ribonucleoside + phosphate = a purine nucleobase + alpha-D-ribose 1-phosphate. It carries out the reaction adenosine + phosphate = alpha-D-ribose 1-phosphate + adenine. The catalysed reaction is cytidine + phosphate = cytosine + alpha-D-ribose 1-phosphate. The enzyme catalyses guanosine + phosphate = alpha-D-ribose 1-phosphate + guanine. It catalyses the reaction inosine + phosphate = alpha-D-ribose 1-phosphate + hypoxanthine. It carries out the reaction thymidine + phosphate = 2-deoxy-alpha-D-ribose 1-phosphate + thymine. The catalysed reaction is uridine + phosphate = alpha-D-ribose 1-phosphate + uracil. The enzyme catalyses xanthosine + phosphate = alpha-D-ribose 1-phosphate + xanthine. In terms of biological role, catalyzes the phosphorolysis of diverse nucleosides, yielding D-ribose 1-phosphate and the respective free bases. Can use uridine, adenosine, guanosine, cytidine, thymidine, inosine and xanthosine as substrates. Also catalyzes the reverse reactions. The protein is Pyrimidine/purine nucleoside phosphorylase of Shewanella pealeana (strain ATCC 700345 / ANG-SQ1).